A 145-amino-acid polypeptide reads, in one-letter code: Ribonuclease P protein component (145 aa).

The segment at 119 to 145 is disordered; sequence PLPAAPGTMPPARTVRPSSPSPTEPEL.

It belongs to the RnpA family. As to quaternary structure, consists of a catalytic RNA component (M1 or rnpB) and a protein subunit.

The enzyme catalyses Endonucleolytic cleavage of RNA, removing 5'-extranucleotides from tRNA precursor.. RNaseP catalyzes the removal of the 5'-leader sequence from pre-tRNA to produce the mature 5'-terminus. It can also cleave other RNA substrates such as 4.5S RNA. The protein component plays an auxiliary but essential role in vivo by binding to the 5'-leader sequence and broadening the substrate specificity of the ribozyme. The chain is Ribonuclease P protein component from Xanthomonas euvesicatoria pv. vesicatoria (strain 85-10) (Xanthomonas campestris pv. vesicatoria).